Consider the following 513-residue polypeptide: Cytochrome P450 72A552 (513 aa).

A helical transmembrane segment spans residues Glu2–Trp22. A heme-binding site is contributed by Cys460.

This sequence belongs to the cytochrome P450 family. Heme is required as a cofactor.

The protein resides in the membrane. It catalyses the reaction oleanolate + reduced [NADPH--hemoprotein reductase] + O2 = hederagenin + oxidized [NADPH--hemoprotein reductase] + H2O + H(+). Functionally, catalyzes the oxidation of oleanolate at the C-23 position to form hederagenin. The chain is Cytochrome P450 72A552 from Barbarea vulgaris (Yellow rocket).